We begin with the raw amino-acid sequence, 260 residues long: MLLAVDCGNTNTVFALWDGDQMIGHWRTSTEWQRTADQYYVWLSTLMNLQGIKAQITDMIISSTVPRVVFNLRVLSDRYFNTRPLVVGKPECALPVDVRVDEGTTVGPDRLVNTVAGYEKYGGDLIVVDFGTATTFDVVAADGAYVGGVIAPGVNLSLEALHHAAAALPHVDISKPQNVIGTNTVACMQSGVFWGYVGLVREICDRIKAESGVPMKVISTGGLAPLFQQTADLFDAYEDDLTMQGLRRIHEHNKDIGNHA.

6-13 (DCGNTNTV) contributes to the ATP binding site. Position 107–110 (107–110 (GPDR)) interacts with substrate. D109 acts as the Proton acceptor in catalysis. K(+) is bound at residue D129. T132 contributes to the ATP binding site. T184 lines the substrate pocket.

It belongs to the type III pantothenate kinase family. In terms of assembly, homodimer. NH4(+) is required as a cofactor. It depends on K(+) as a cofactor.

It is found in the cytoplasm. It carries out the reaction (R)-pantothenate + ATP = (R)-4'-phosphopantothenate + ADP + H(+). Its pathway is cofactor biosynthesis; coenzyme A biosynthesis; CoA from (R)-pantothenate: step 1/5. Catalyzes the phosphorylation of pantothenate (Pan), the first step in CoA biosynthesis. This chain is Type III pantothenate kinase, found in Ruegeria sp. (strain TM1040) (Silicibacter sp.).